We begin with the raw amino-acid sequence, 413 residues long: DNA primase DnaG (413 aa).

The 79-residue stretch at 168–246 (PNLIIVEGRA…KIDYVARAPV (79 aa)) folds into the Toprim domain. Positions 174, 219, and 221 each coordinate Mg(2+).

Belongs to the archaeal DnaG primase family. As to quaternary structure, forms a ternary complex with MCM helicase and DNA. Component of the archaeal exosome complex. Mg(2+) is required as a cofactor.

It catalyses the reaction ssDNA + n NTP = ssDNA/pppN(pN)n-1 hybrid + (n-1) diphosphate.. Functionally, RNA polymerase that catalyzes the synthesis of short RNA molecules used as primers for DNA polymerase during DNA replication. Also part of the exosome, which is a complex involved in RNA degradation. Acts as a poly(A)-binding protein that enhances the interaction between heteromeric, adenine-rich transcripts and the exosome. In Metallosphaera sedula (strain ATCC 51363 / DSM 5348 / JCM 9185 / NBRC 15509 / TH2), this protein is DNA primase DnaG.